Reading from the N-terminus, the 328-residue chain is Phenylalanine--tRNA ligase alpha subunit (328 aa).

E253 provides a ligand contact to Mg(2+).

The protein belongs to the class-II aminoacyl-tRNA synthetase family. Phe-tRNA synthetase alpha subunit type 1 subfamily. In terms of assembly, tetramer of two alpha and two beta subunits. Mg(2+) is required as a cofactor.

It localises to the cytoplasm. It carries out the reaction tRNA(Phe) + L-phenylalanine + ATP = L-phenylalanyl-tRNA(Phe) + AMP + diphosphate + H(+). The polypeptide is Phenylalanine--tRNA ligase alpha subunit (Chromobacterium violaceum (strain ATCC 12472 / DSM 30191 / JCM 1249 / CCUG 213 / NBRC 12614 / NCIMB 9131 / NCTC 9757 / MK)).